We begin with the raw amino-acid sequence, 103 residues long: Flagellar hook-basal body complex protein FliE (103 aa).

It belongs to the FliE family.

It is found in the bacterial flagellum basal body. The sequence is that of Flagellar hook-basal body complex protein FliE from Erwinia tasmaniensis (strain DSM 17950 / CFBP 7177 / CIP 109463 / NCPPB 4357 / Et1/99).